Reading from the N-terminus, the 643-residue chain is Extracellular metalloproteinase 4 (643 aa).

The N-terminal stretch at 1 to 18 is a signal peptide; it reads MHGLMLAGLLALPLSVLG. A propeptide spanning residues 19 to 254 is cleaved from the precursor; the sequence is HPTESHSSGI…VHSVVDYVSA (236 aa). The span at 47–57 shows a compositional bias: basic and acidic residues; the sequence is TKSDAVPKQDG. The disordered stretch occupies residues 47-73; the sequence is TKSDAVPKQDGESFTTSSTGNDNSSSG. The segment covering 61–73 has biased composition (low complexity); sequence TTSSTGNDNSSSG. Residues asparagine 271 and asparagine 420 are each glycosylated (N-linked (GlcNAc...) asparagine). Histidine 437 lines the Zn(2+) pocket. Residue glutamate 438 is part of the active site. Histidine 441 provides a ligand contact to Zn(2+). N-linked (GlcNAc...) asparagine glycans are attached at residues asparagine 603 and asparagine 629.

This sequence belongs to the peptidase M36 family. The cofactor is Zn(2+).

The protein localises to the secreted. Secreted metalloproteinase probably acting as a virulence factor. The polypeptide is Extracellular metalloproteinase 4 (MEP4) (Trichophyton rubrum (Athlete's foot fungus)).